Reading from the N-terminus, the 508-residue chain is Probable polyol transporter 3 (508 aa).

A run of 12 helical transmembrane segments spans residues 21–41 (FAFG…YDTG), 60–80 (QIEV…LTAG), 90–110 (YTIA…GYGP), 120–140 (CIAG…SAEI), 147–167 (GFLT…GYVS), 178–198 (LGWR…AFGI), 280–300 (ILIA…EAVV), 318–338 (LLLA…IATF), 348–368 (LLLT…VSLT), 384–404 (IVST…ITWV), 418–438 (GASI…MSFL), and 448–468 (GVFF…FFML).

It belongs to the major facilitator superfamily. Sugar transporter (TC 2.A.1.1) family.

It localises to the membrane. In terms of biological role, plasma membrane sugar-proton symporter. The chain is Probable polyol transporter 3 (PLT3) from Arabidopsis thaliana (Mouse-ear cress).